A 336-amino-acid chain; its full sequence is D-alanine--D-alanine ligase (336 aa).

The region spanning 124 to 330 is the ATP-grasp domain; the sequence is KMWFSALGIP…FTEYLSLVIN (207 aa). 154-209 contacts ATP; it reads ALENWGSIFVKAASQGSSVGCYKVDDSSKVADVLKDAFGYAPYVIVEKTIKARELE. Residues Asp-284, Glu-297, and Asn-299 each contribute to the Mg(2+) site.

This sequence belongs to the D-alanine--D-alanine ligase family. It depends on Mg(2+) as a cofactor. The cofactor is Mn(2+).

It is found in the cytoplasm. It carries out the reaction 2 D-alanine + ATP = D-alanyl-D-alanine + ADP + phosphate + H(+). Its pathway is cell wall biogenesis; peptidoglycan biosynthesis. In terms of biological role, cell wall formation. The sequence is that of D-alanine--D-alanine ligase from Shewanella sp. (strain ANA-3).